Consider the following 314-residue polypeptide: Palmitoyl-protein thioesterase 1 (314 aa).

Positions 1-25 (MISICCSRFSCILFLLFLIFSLVLS) are cleaved as a signal peptide. 3 disulfides stabilise this stretch: cysteine 53-cysteine 54, cysteine 104-cysteine 136, and cysteine 160-cysteine 168. The Nucleophile role is filled by serine 123. N-linked (GlcNAc...) asparagine glycosylation occurs at asparagine 240. Residues aspartate 241 and histidine 295 contribute to the active site.

This sequence belongs to the palmitoyl-protein thioesterase family. In terms of tissue distribution, ubiquitously expressed.

It is found in the lysosome. The catalysed reaction is S-hexadecanoyl-L-cysteinyl-[protein] + H2O = L-cysteinyl-[protein] + hexadecanoate + H(+). Its function is as follows. Cleaves thioester-linked long fatty acyl groups such as palmitate from modified cysteine residues in proteins or peptides. This Drosophila melanogaster (Fruit fly) protein is Palmitoyl-protein thioesterase 1 (Ppt1).